Here is a 263-residue protein sequence, read N- to C-terminus: Glutathione S-transferase F8, chloroplastic (263 aa).

A chloroplast-targeting transit peptide spans 1–49 (MGAIQARLPLFLSPPSIKHHTFLHSSSSNSNFKIRSNKSSSSSSSSIIM). The GST N-terminal domain occupies 50–131 (ASIKVHGVPM…YLAEEYSEKG (82 aa)). Glutathione contacts are provided by residues 60-61 (ST), 89-90 (HK), 102-103 (QI), and 115-116 (ES). The region spanning 139 to 263 (CKKVKATTNV…WAKVIDLQKQ (125 aa)) is the GST C-terminal domain. Position 177 is a phosphothreonine (Thr177).

The protein belongs to the GST superfamily. Phi family. As to expression, isoform 1 is predominantly expressed in leaves and isoform 2 in roots.

The protein localises to the plastid. It localises to the chloroplast. Its subcellular location is the cytoplasm. It is found in the cytosol. It carries out the reaction RX + glutathione = an S-substituted glutathione + a halide anion + H(+). In terms of biological role, in vitro, possesses glutathione S-transferase activity toward 1-chloro-2,4-dinitrobenzene (CDNB) and glutathione peroxidase activity toward cumene hydroperoxide and linoleic acid-13-hydroperoxide. May be involved in the conjugation of reduced glutathione to a wide number of exogenous and endogenous hydrophobic electrophiles and have a detoxification role against certain herbicides. The protein is Glutathione S-transferase F8, chloroplastic (GSTF8) of Arabidopsis thaliana (Mouse-ear cress).